The following is a 372-amino-acid chain: Aminomethyltransferase (372 aa).

The protein belongs to the GcvT family. In terms of assembly, the glycine cleavage system is composed of four proteins: P, T, L and H.

The catalysed reaction is N(6)-[(R)-S(8)-aminomethyldihydrolipoyl]-L-lysyl-[protein] + (6S)-5,6,7,8-tetrahydrofolate = N(6)-[(R)-dihydrolipoyl]-L-lysyl-[protein] + (6R)-5,10-methylene-5,6,7,8-tetrahydrofolate + NH4(+). The glycine cleavage system catalyzes the degradation of glycine. In Paraburkholderia phymatum (strain DSM 17167 / CIP 108236 / LMG 21445 / STM815) (Burkholderia phymatum), this protein is Aminomethyltransferase.